The sequence spans 217 residues: Ribonuclease HII (217 aa).

The RNase H type-2 domain maps to 16–217 (YCIAGVDEVG…VARVLGTYHD (202 aa)). Residues Asp22, Glu23, and Asp114 each contribute to the a divalent metal cation site.

The protein belongs to the RNase HII family. Requires Mn(2+) as cofactor. Mg(2+) serves as cofactor.

It localises to the cytoplasm. It catalyses the reaction Endonucleolytic cleavage to 5'-phosphomonoester.. Its function is as follows. Endonuclease that specifically degrades the RNA of RNA-DNA hybrids. The polypeptide is Ribonuclease HII (Colwellia psychrerythraea (strain 34H / ATCC BAA-681) (Vibrio psychroerythus)).